We begin with the raw amino-acid sequence, 179 residues long: Adenine phosphoribosyltransferase (179 aa).

The protein belongs to the purine/pyrimidine phosphoribosyltransferase family. In terms of assembly, homodimer.

It is found in the cytoplasm. The catalysed reaction is AMP + diphosphate = 5-phospho-alpha-D-ribose 1-diphosphate + adenine. The protein operates within purine metabolism; AMP biosynthesis via salvage pathway; AMP from adenine: step 1/1. Catalyzes a salvage reaction resulting in the formation of AMP, that is energically less costly than de novo synthesis. The sequence is that of Adenine phosphoribosyltransferase from Nitrobacter hamburgensis (strain DSM 10229 / NCIMB 13809 / X14).